A 97-amino-acid chain; its full sequence is Co-chaperonin GroES (97 aa).

This sequence belongs to the GroES chaperonin family. Heptamer of 7 subunits arranged in a ring. Interacts with the chaperonin GroEL.

It localises to the cytoplasm. In terms of biological role, together with the chaperonin GroEL, plays an essential role in assisting protein folding. The GroEL-GroES system forms a nano-cage that allows encapsulation of the non-native substrate proteins and provides a physical environment optimized to promote and accelerate protein folding. GroES binds to the apical surface of the GroEL ring, thereby capping the opening of the GroEL channel. The sequence is that of Co-chaperonin GroES from Sodalis glossinidius (strain morsitans).